A 218-amino-acid polypeptide reads, in one-letter code: Protein N-lysine methyltransferase METTL21A (218 aa).

S-adenosyl-L-methionine-binding positions include Trp47, 73 to 75 (GAG), Asp94, Trp125, and Ala143.

This sequence belongs to the methyltransferase superfamily. METTL21 family. As to quaternary structure, interacts with heat shock 70 family members; at least some of these proteins are methylation substrates.

It is found in the cytoplasm. It carries out the reaction L-lysyl-[protein] + 3 S-adenosyl-L-methionine = N(6),N(6),N(6)-trimethyl-L-lysyl-[protein] + 3 S-adenosyl-L-homocysteine + 3 H(+). In terms of biological role, protein-lysine methyltransferase that selectively trimethylates residues in heat shock protein 70 (HSP70) family members. Contributes to the in vivo trimethylation of Lys residues in HSPA1 and HSPA8. In vitro methylates 'Lys-561' in HSPA1, 'Lys-564' in HSPA2, 'Lys-585' in HSPA5, 'Lys-563' in HSPA6 and 'Lys-561' in HSPA8. The sequence is that of Protein N-lysine methyltransferase METTL21A (METTL21A) from Bos taurus (Bovine).